Consider the following 234-residue polypeptide: Leucyl/phenylalanyl-tRNA--protein transferase (234 aa).

It belongs to the L/F-transferase family.

The protein localises to the cytoplasm. The enzyme catalyses N-terminal L-lysyl-[protein] + L-leucyl-tRNA(Leu) = N-terminal L-leucyl-L-lysyl-[protein] + tRNA(Leu) + H(+). It carries out the reaction N-terminal L-arginyl-[protein] + L-leucyl-tRNA(Leu) = N-terminal L-leucyl-L-arginyl-[protein] + tRNA(Leu) + H(+). It catalyses the reaction L-phenylalanyl-tRNA(Phe) + an N-terminal L-alpha-aminoacyl-[protein] = an N-terminal L-phenylalanyl-L-alpha-aminoacyl-[protein] + tRNA(Phe). Functionally, functions in the N-end rule pathway of protein degradation where it conjugates Leu, Phe and, less efficiently, Met from aminoacyl-tRNAs to the N-termini of proteins containing an N-terminal arginine or lysine. This is Leucyl/phenylalanyl-tRNA--protein transferase from Shigella dysenteriae serotype 1 (strain Sd197).